Consider the following 382-residue polypeptide: Pyrimidine monooxygenase RutA (382 aa).

FMN is bound by residues 68-69 (IK), Asn134, Glu143, 159-160 (RY), and Ser209.

This sequence belongs to the NtaA/SnaA/DszA monooxygenase family. RutA subfamily.

It catalyses the reaction uracil + FMNH2 + NADH + O2 = (Z)-3-ureidoacrylate + FMN + NAD(+) + H2O + H(+). The catalysed reaction is thymine + FMNH2 + NADH + O2 = (Z)-2-methylureidoacrylate + FMN + NAD(+) + H2O + H(+). In terms of biological role, catalyzes the pyrimidine ring opening between N-3 and C-4 by an unusual flavin hydroperoxide-catalyzed mechanism, adding oxygen atoms in the process to yield ureidoacrylate peracid, that immediately reacts with FMN forming ureidoacrylate and FMN-N(5)-oxide. The FMN-N(5)-oxide reacts spontaneously with NADH to produce FMN. Requires the flavin reductase RutF to regenerate FMN in vivo. This Escherichia coli O81 (strain ED1a) protein is Pyrimidine monooxygenase RutA.